Consider the following 532-residue polypeptide: 4-amino-L-phenylalanyl-[CmlP-peptidyl-carrier-protein] 3-hydroxylase (532 aa).

H305, H307, D309, H310, E377, and D403 together coordinate Fe cation.

Belongs to the metallo-beta-lactamase superfamily. Homodimer. The cofactor is Fe(2+).

It catalyses the reaction 4-amino-L-phenylalanyl-[peptidyl-carrier protein] + AH2 + O2 = (2R)-2-(4-aminophenyl)-L-seryl-[peptidyl-carrier protein] + A + H2O. It participates in antibiotic biosynthesis. Its function is as follows. Involved in chloramphenicol biosynthesis. Catalyzes the beta-hydroxylation of 4-amino-L-phenylalanine (L-PAPA) covalently bound to CmlP to form L-p-aminophenylserine. In Streptomyces venezuelae (strain ATCC 10712 / CBS 650.69 / DSM 40230 / JCM 4526 / NBRC 13096 / PD 04745), this protein is 4-amino-L-phenylalanyl-[CmlP-peptidyl-carrier-protein] 3-hydroxylase.